The sequence spans 426 residues: Meiotically up-regulated gene 170 protein (426 aa).

It belongs to the arrestin family.

It is found in the cytoplasm. Its subcellular location is the nucleus. In terms of biological role, has a role in meiosis. This is Meiotically up-regulated gene 170 protein (mug170) from Schizosaccharomyces pombe (strain 972 / ATCC 24843) (Fission yeast).